Consider the following 1024-residue polypeptide: Non-canonical nonribosomal peptide synthetase FrzA (1024 aa).

The interval 29–425 (RAQKSHQAIA…GRRDHQVKVR (397 aa)) is adenylation (A) domain. One can recognise a Carrier domain in the interval 534–611 (NASQDVRSAL…ALTSIIKQRL (78 aa)). Position 571 is an O-(pantetheine 4'-phosphoryl)serine (S571). The Thioester reductase (TE) domain occupies 655–898 (LTGGTGFVGA…VPVDYVNAAI (244 aa)).

It belongs to the NRP synthetase family. The cofactor is pantetheine 4'-phosphate.

It carries out the reaction L-tyrosinal + AMP + diphosphate + NADP(+) = L-tyrosine + ATP + NADPH + H(+). It functions in the pathway secondary metabolite biosynthesis. Functionally, non-canonical nonribosomal peptide synthetase; part of the gene cluster that mediates the biosynthesis of the alkaloid (-)-FR901483, a potent immunosuppressant that shows efficacy in animal models and a probable inhibitor of purine nucleotide biosynthesis by targeting phosphoribosylpyrophosphate amidotransferase (PPAT). Within the pathway, FrzA catalyzes the reduction of L-tyrosine via its C-terminal reductase domain to produce L-tyrosinal. The biosynthesis of (-)-FR901483 starts with the condensation of two L-tyrosines to yield (S,S)-dityrosyl-piperazine. This process occurs in 3 steps with the non-canonical nonribosomal peptide synthetase FrzA catalyzing the reduction of L-tyrosine into L-tyrosinal, the spontaneous condensation of 2 L-tyrosinal units, and the subsequent reduction by the NmrA-like family domain-containing oxidoreductase FrzB. The cytochrome P450 monooxygenase FrzC then performs coupling between N10 and C1' to morph the piperazine into a 1,4-diazabicyclo[3.2.1]octane spiro-fused to a 2,5-cyclohexadienone. The dienone portion is further reduced to cyclohexanone by the flavin-dependent reductase FrzD. The methyltranserases (MTs) FrzE and FrzF are then involved in the methylation at the C10' amine and the C4 phenolic oxygen, respectively. The order of the two MTs appear to be interchangeable. Cleavage of the C9-N10' bond by the dioxygenase FrzG then leads to formation of a conjugated iminium. In addition to the oxidation of C9, an additional dehydrogenation between C7 and C8 can occur to give a likely shunt product. The next biosynthetic step is the intramolecular aldol condensation catalyzed by the newly identified aldolase FrzH to yield an aza-tricyclic product with the formation of a C9-C3' bond. The short-chain dehydrogenase/reductase FrzI then produces dephospho-(-)-FR901483 that is phosphorylated at C4'-OH into (-)-FR901483 by the phosphotransferase FrzJ. This Cladobotryum sp protein is Non-canonical nonribosomal peptide synthetase FrzA.